Reading from the N-terminus, the 77-residue chain is Large ribosomal subunit protein bL28 (77 aa).

The tract at residues 1-25 (MARVCQVTGKAPMSGNNVSHANNKT) is disordered.

This sequence belongs to the bacterial ribosomal protein bL28 family.

This Paraburkholderia xenovorans (strain LB400) protein is Large ribosomal subunit protein bL28.